Consider the following 678-residue polypeptide: PTS system glucose-specific EIICBA component (678 aa).

Residues 3–414 enclose the PTS EIIC type-1 domain; the sequence is KKLFGQLQRI…FKYKTPGRED (412 aa). The next 11 membrane-spanning stretches (helical) occupy residues 16–36, 63–83, 89–109, 126–146, 170–190, 211–231, 273–293, 303–323, 329–349, 355–375, and 382–402; these read LMLP…GTAM, AGGI…AIGL, VAAI…GAFL, VLGI…GALA, FVPI…AWIW, LAVF…LHHI, FMQG…LAIY, VVAG…ITEP, LFVA…SFLI, VHLG…GVLP, and LVIP…RFLI. Residues 425–506 enclose the PTS EIIB type-1 domain; the sequence is SELPFNVLKA…SLIMKGEITK (82 aa). Cysteine 447 functions as the Phosphocysteine intermediate; for EIIB activity in the catalytic mechanism. In terms of domain architecture, PTS EIIA type-1 spans 547 to 651; it reads DQVFAQKMMG…STVTPLIITN (105 aa). The active-site Tele-phosphohistidine intermediate; for EIIA activity is histidine 599.

Its subcellular location is the cell membrane. It catalyses the reaction N(pros)-phospho-L-histidyl-[protein] + D-glucose(out) = D-glucose 6-phosphate(in) + L-histidyl-[protein]. In terms of biological role, the phosphoenolpyruvate-dependent sugar phosphotransferase system (sugar PTS), a major carbohydrate active transport system, catalyzes the phosphorylation of incoming sugar substrates concomitantly with their translocation across the cell membrane. This system is involved in glucose transport. This is PTS system glucose-specific EIICBA component (ptsG) from Staphylococcus saprophyticus subsp. saprophyticus (strain ATCC 15305 / DSM 20229 / NCIMB 8711 / NCTC 7292 / S-41).